A 282-amino-acid polypeptide reads, in one-letter code: ATP synthase gamma chain (282 aa).

It belongs to the ATPase gamma chain family. F-type ATPases have 2 components, CF(1) - the catalytic core - and CF(0) - the membrane proton channel. CF(1) has five subunits: alpha(3), beta(3), gamma(1), delta(1), epsilon(1). CF(0) has three main subunits: a, b and c.

The protein localises to the cell membrane. Its function is as follows. Produces ATP from ADP in the presence of a proton gradient across the membrane. The gamma chain is believed to be important in regulating ATPase activity and the flow of protons through the CF(0) complex. In Clostridium botulinum (strain ATCC 19397 / Type A), this protein is ATP synthase gamma chain.